The primary structure comprises 181 residues: Translation initiation factor IF-3 (181 aa).

Belongs to the IF-3 family. As to quaternary structure, monomer.

The protein localises to the cytoplasm. Functionally, IF-3 binds to the 30S ribosomal subunit and shifts the equilibrium between 70S ribosomes and their 50S and 30S subunits in favor of the free subunits, thus enhancing the availability of 30S subunits on which protein synthesis initiation begins. This is Translation initiation factor IF-3 from Pseudoalteromonas translucida (strain TAC 125).